A 130-amino-acid chain; its full sequence is Small ribosomal subunit protein uS8 (130 aa).

Belongs to the universal ribosomal protein uS8 family.

This chain is Small ribosomal subunit protein uS8 (RPS22), found in Candida glabrata (strain ATCC 2001 / BCRC 20586 / JCM 3761 / NBRC 0622 / NRRL Y-65 / CBS 138) (Yeast).